Here is a 98-residue protein sequence, read N- to C-terminus: Large ribosomal subunit protein uL23 (98 aa).

The protein belongs to the universal ribosomal protein uL23 family. Part of the 50S ribosomal subunit. Contacts protein L29, and trigger factor when it is bound to the ribosome.

Functionally, one of the early assembly proteins it binds 23S rRNA. One of the proteins that surrounds the polypeptide exit tunnel on the outside of the ribosome. Forms the main docking site for trigger factor binding to the ribosome. This chain is Large ribosomal subunit protein uL23, found in Bifidobacterium longum (strain DJO10A).